We begin with the raw amino-acid sequence, 398 residues long: AT-rich interactive domain-containing protein 6 (398 aa).

The disordered stretch occupies residues 25–87 (EPLEPENDHN…PKTEGENAKK (63 aa)). Residues 106-197 (PVEQVAFLRE…ALLEYEKCLR (92 aa)) enclose the ARID domain. Positions 213 to 236 (SSVEKEPSSHQGSGSGRARRDSAA) are disordered. The region spanning 305–398 (VGPVADWVKI…RLFIRVPFEQ (94 aa)) is the sHSP domain.

This sequence belongs to the small heat shock protein (HSP20) family.

It is found in the nucleus. The protein is AT-rich interactive domain-containing protein 6 (ARID6) of Arabidopsis thaliana (Mouse-ear cress).